The chain runs to 236 residues: UPF0173 metal-dependent hydrolase AZC_2841 (236 aa).

Belongs to the UPF0173 family.

The chain is UPF0173 metal-dependent hydrolase AZC_2841 from Azorhizobium caulinodans (strain ATCC 43989 / DSM 5975 / JCM 20966 / LMG 6465 / NBRC 14845 / NCIMB 13405 / ORS 571).